A 1750-amino-acid polypeptide reads, in one-letter code: Protein TIC 214 (1750 aa).

Transmembrane regions (helical) follow at residues 12–32 (KIIN…ALSI), 69–89 (FIMG…YVAL), 97–117 (ILAL…SFFA), 129–149 (LEIY…SCIL), 177–197 (FAWF…LVWI), and 216–236 (IFVI…SIQC). A compositionally biased stretch (basic and acidic residues) spans 260–277 (RERLQKEEERGVEKKEQS). Disordered regions lie at residues 260–282 (RERL…EEDP), 617–638 (ATTT…KKES), 718–738 (STDK…KQRE), 1205–1225 (RNSR…PKPV), and 1419–1512 (ETDS…NKKE). Over residues 617 to 629 (ATTTNSKTNTTKD) the composition is skewed to low complexity. Over residues 727–738 (KKEEKRENKQRE) the composition is skewed to basic and acidic residues. Residues 1420–1512 (TDSKQKSETD…TKSDKKNKKE (93 aa)) show a composition bias toward basic and acidic residues.

The protein belongs to the TIC214 family. As to quaternary structure, part of the Tic complex.

The protein resides in the plastid. It is found in the chloroplast inner membrane. Its function is as follows. Involved in protein precursor import into chloroplasts. May be part of an intermediate translocation complex acting as a protein-conducting channel at the inner envelope. The protein is Protein TIC 214 of Cuscuta reflexa (Southern Asian dodder).